Consider the following 370-residue polypeptide: Ubiquitin carboxyl-terminal hydrolase 12 (370 aa).

The Required for plasma membrane localization of USP12/WDR20 signature appears at M1–L4. A USP domain is found at F39–R369. C48 functions as the Nucleophile in the catalytic mechanism. The segment at K145–P169 is disordered. Polar residues predominate over residues N157–D168. Zn(2+)-binding residues include C186, C189, C233, and C236. Catalysis depends on H317, which acts as the Proton acceptor.

It belongs to the peptidase C19 family. USP12/USP46 subfamily. In terms of assembly, interacts with WDR48. Interacts with WDR20; this interaction promotes translocation of the USP12 complex to the plasma membrane. Component of the USP12-WDR20-WDR48 deubiquitinating complex. Component of the USP12-DMWD-WDR48 deubiquitinating complex. Interacts with PHLPP1. Interacts with RBPJ. Interacts with CBP; this interaction blocks the acetyltransferase activity of CREBBP. Interacts with ITCH; the interaction is more efficient when both USP12 and WDR48/UAF1 are involved and may mediate recruitment of the USP12 deubiquitinating complex to Notch. Interacts with OPTN and SQSTM1/p62; the interaction is independent of deubiquitinase activity and may be involved in regulation of autophagic flux. As to quaternary structure, (Microbial infection) Interacts with Epstein-Barr virus protein EBNA3.

It localises to the nucleus. The protein resides in the cytoplasm. Its subcellular location is the cell membrane. It carries out the reaction Thiol-dependent hydrolysis of ester, thioester, amide, peptide and isopeptide bonds formed by the C-terminal Gly of ubiquitin (a 76-residue protein attached to proteins as an intracellular targeting signal).. Activated by interaction with WDR20, WDR48 and DMWD through different allosteric mechanisms. Deubiquitinating enzyme that plays various roles in the regulation of the immune response and inflammation. During TCR engagement and activation, translocates into the cytoplasm and deubiquitinates its substrates LAT and TRAT1 and prevents their lysosome-dependent degradation to stabilize the TCR signaling complex at the plasma membrane. Plays an essential role in the selective LPS-induced macrophage response through the activation of NF-kappa-B pathway. In addition, promotes that antiviral immune response through targeting DNA sensor IFI16 to inhibit its proteasome-dependent degradation. Participates in the interferon signaling pathway and antiviral response independently of its deubiquitinase activity by maintaining nuclear phosphorylated STAT1 levels via inhibition of its CREBBP-mediated acetylation and subsequent dephosphorylation. Plays an intrinsic role in promoting the differentiation, activation and proliferation of CD4(+) T-cell by activating the NF-kappa-B signaling pathway through deubiquitinating and stabilizing B-cell lymphoma/leukemia 10/BCL10. In myeloid-derived suppressor cells promotes the activation of the NF-kappa-B via deubiquitination and stabilization of RELA. Regulates the 'Lys-63'-linked polyubiquitin chains of BAX and thereby modulates the mitochondrial apoptotic process. Negative regulator of NOTCH signaling that specifically deubiquitinates non-activated NOTCH receptors to target them for lysosomal degradation; deubiquitination of NOTCH stimulates its transport form late endosomes to lysosomes. Protects neurons against HTT/huntingtin-induced polyglutamine expansion-dependent neurodegeneration through regulation of autophagic flux. This function is independent of deubiquitinase activity or of other components of the USP12-WDR20-WDR48 deubiquitinating complex. In complex with WDR48, acts as a potential tumor suppressor by positively regulating PHLPP1 stability. Its function is as follows. (Microbial infection) Forms a complex with Epstein-Barr virus protein EBNA3 which is an active deubiquitinase activity that may select specific substrates to promote B-lymphocyte transformation. This is Ubiquitin carboxyl-terminal hydrolase 12 (USP12) from Homo sapiens (Human).